A 491-amino-acid polypeptide reads, in one-letter code: Ketol-acid reductoisomerase (NADP(+)) (491 aa).

Residues 17-208 (LGKCRFMSRD…GGHRAGVLES (192 aa)) form the KARI N-terminal Rossmann domain. Residues 45 to 48 (CGAQ), Arg-68, Arg-76, Ser-78, and 108 to 110 (DKQ) contribute to the NADP(+) site. The active site involves His-132. Gly-158 contributes to the NADP(+) binding site. KARI C-terminal knotted domains are found at residues 209-344 (SFVA…NYPE) and 345-484 (YEGK…MTDM). Mg(2+)-binding residues include Asp-217, Glu-221, Glu-389, and Glu-393. Ser-414 lines the substrate pocket.

It belongs to the ketol-acid reductoisomerase family. Mg(2+) is required as a cofactor.

The enzyme catalyses (2R)-2,3-dihydroxy-3-methylbutanoate + NADP(+) = (2S)-2-acetolactate + NADPH + H(+). It catalyses the reaction (2R,3R)-2,3-dihydroxy-3-methylpentanoate + NADP(+) = (S)-2-ethyl-2-hydroxy-3-oxobutanoate + NADPH + H(+). Its pathway is amino-acid biosynthesis; L-isoleucine biosynthesis; L-isoleucine from 2-oxobutanoate: step 2/4. The protein operates within amino-acid biosynthesis; L-valine biosynthesis; L-valine from pyruvate: step 2/4. Its function is as follows. Involved in the biosynthesis of branched-chain amino acids (BCAA). Catalyzes an alkyl-migration followed by a ketol-acid reduction of (S)-2-acetolactate (S2AL) to yield (R)-2,3-dihydroxy-isovalerate. In the isomerase reaction, S2AL is rearranged via a Mg-dependent methyl migration to produce 3-hydroxy-3-methyl-2-ketobutyrate (HMKB). In the reductase reaction, this 2-ketoacid undergoes a metal-dependent reduction by NADPH to yield (R)-2,3-dihydroxy-isovalerate. This Proteus mirabilis (strain HI4320) protein is Ketol-acid reductoisomerase (NADP(+)).